The following is a 1211-amino-acid chain: PH domain-containing protein DDB_G0287875 (1211 aa).

Residues 5–90 (QKKILKVFDQ…YKFFFLNPNG (86 aa)) enclose the Ras-associating 1 domain. Polar residues predominate over residues 103–112 (KSQSASTSGS). The interval 103-133 (KSQSASTSGSAPPKKEPPKPQELQQKQHISK) is disordered. In terms of domain architecture, PH spans 132–223 (SKGKSGWLLR…WAQELQATMN (92 aa)). 2 consecutive Calponin-homology (CH) domains span residues 277-384 (TTLV…VGYF) and 392-502 (FNMR…LSGQ). Disordered stretches follow at residues 520 to 941 (VEPE…TESV) and 973 to 1110 (TSAT…PKNT). A coiled-coil region spans residues 527–572 (SIRDKQLKLMREKKEEEDRLKKEKEEKEKEEKEKLEKESSAAAAAT). Residues 528–565 (IRDKQLKLMREKKEEEDRLKKEKEEKEKEEKEKLEKES) show a composition bias toward basic and acidic residues. Low complexity-rich tracts occupy residues 566 to 596 (SAAA…PLKK), 607 to 646 (PPTV…TLTP), 655 to 668 (KKPA…KPVA), and 676 to 691 (PSSS…TTPS). Residues 703-729 (QLEKEKQDRLEKARLEKEKAEKEEQEF) show a composition bias toward basic and acidic residues. Residues 703-847 (QLEKEKQDRL…ERKHDENDMD (145 aa)) adopt a coiled-coil conformation. Over residues 744–753 (LLEQQKQQQE) the composition is skewed to low complexity. Basic and acidic residues-rich tracts occupy residues 754–778 (GQER…QRQI) and 786–853 (EARI…KLLE). Positions 862-877 (PTITPPQSLHSSQIIR) are enriched in polar residues. Positions 880-909 (IEEDDQTNSELEMFQNEYNRLQDEEEHINS) form a coiled coil. 2 stretches are compositionally biased toward low complexity: residues 914–936 (GSSG…GASS) and 976–1010 (TTSD…TNNN). The span at 1032–1048 (TKEQQSIIDKQTGLVSK) shows a compositional bias: polar residues. The stretch at 1048–1076 (KQSTNNESNEQQQQQQQQQQLQQQQSSQN) forms a coiled coil. Low complexity predominate over residues 1049-1083 (QSTNNESNEQQQQQQQQQQLQQQQSSQNSTTSIST). Over residues 1093 to 1104 (NEEKEKESEPHK) the composition is skewed to basic and acidic residues. In terms of domain architecture, Ras-associating 2 spans 1112–1196 (GRVVVRICLE…DRFVFKKNDI (85 aa)).

This is PH domain-containing protein DDB_G0287875 from Dictyostelium discoideum (Social amoeba).